A 774-amino-acid polypeptide reads, in one-letter code: Pentatricopeptide repeat-containing protein At4g20770 (774 aa).

PPR repeat units follow at residues 5–39 (GNKY…GMKS), 40–70 (DTYL…MSVR), 71–101 (DVYS…MPER), 102–136 (DVVS…GFLP), 137–171 (SRFT…GLDK), 172–203 (NIFV…LSQP), 204–238 (NEVS…GVQV), 239–270 (DSVC…LGKQ), 283–313 (DLHL…MPEV), 314–348 (NVVS…GFQP), 349–379 (NEVT…IPQP), 380–414 (SVSA…NLKP), 415–449 (DKTT…EISK), 450–480 (NSHI…CINE), 482–516 (DIAC…AVLC), 518–552 (NETS…GYVS), 553–583 (DSFV…VLRK), 584–618 (NTVI…GEKP), 619–654 (DGIT…GIEP), and 655–685 (ELDH…TPYK). Residues 690 to 765 (LWEILLSSCR…TPGQSWTTYG (76 aa)) form a type E motif region.

It belongs to the PPR family. PCMP-E subfamily.

The polypeptide is Pentatricopeptide repeat-containing protein At4g20770 (PCMP-E35) (Arabidopsis thaliana (Mouse-ear cress)).